The following is a 1005-amino-acid chain: Isoleucine--tRNA ligase (1005 aa).

Positions 70–80 (PYANGNIHIGH) match the 'HIGH' region motif. E629 contributes to the L-isoleucyl-5'-AMP binding site. Positions 670–674 (KMSKS) match the 'KMSKS' region motif. An ATP-binding site is contributed by K673.

This sequence belongs to the class-I aminoacyl-tRNA synthetase family. IleS type 1 subfamily. In terms of assembly, monomer.

Its subcellular location is the cytoplasm. It carries out the reaction tRNA(Ile) + L-isoleucine + ATP = L-isoleucyl-tRNA(Ile) + AMP + diphosphate. Catalyzes the attachment of isoleucine to tRNA(Ile). As IleRS can inadvertently accommodate and process structurally similar amino acids such as valine, to avoid such errors it has two additional distinct tRNA(Ile)-dependent editing activities. One activity is designated as 'pretransfer' editing and involves the hydrolysis of activated Val-AMP. The other activity is designated 'posttransfer' editing and involves deacylation of mischarged Val-tRNA(Ile). The polypeptide is Isoleucine--tRNA ligase (Rhodopseudomonas palustris (strain ATCC BAA-98 / CGA009)).